The following is a 666-amino-acid chain: Translation factor guf1, mitochondrial (666 aa).

Residues 1–44 constitute a mitochondrion transit peptide; it reads MRGCLQLGRWLSAAPRCQAASLRPPTVFPSYRYNRSFSTTTIYY. The region spanning 68–248 is the tr-type G domain; it reads ERFRNFCIVA…TVVEKVPAPI (181 aa). GTP-binding positions include 77–84, 141–145, and 195–198; these read AHVDHGKS, DTPGH, and NKVD.

It belongs to the TRAFAC class translation factor GTPase superfamily. Classic translation factor GTPase family. LepA subfamily.

The protein resides in the mitochondrion inner membrane. It carries out the reaction GTP + H2O = GDP + phosphate + H(+). Functionally, promotes mitochondrial protein synthesis. May act as a fidelity factor of the translation reaction, by catalyzing a one-codon backward translocation of tRNAs on improperly translocated ribosomes. Binds to mitochondrial ribosomes in a GTP-dependent manner. In Penicillium rubens (strain ATCC 28089 / DSM 1075 / NRRL 1951 / Wisconsin 54-1255) (Penicillium chrysogenum), this protein is Translation factor guf1, mitochondrial (guf1).